The chain runs to 187 residues: Shikimate kinase (187 aa).

14 to 19 (TSGKST) lines the ATP pocket. Ser-18 provides a ligand contact to Mg(2+). Asp-36, Arg-60, and Gly-82 together coordinate substrate. Position 120 (Arg-120) interacts with ATP. Arg-147 is a substrate binding site.

The protein belongs to the shikimate kinase family. In terms of assembly, monomer. It depends on Mg(2+) as a cofactor.

The protein resides in the cytoplasm. It catalyses the reaction shikimate + ATP = 3-phosphoshikimate + ADP + H(+). It participates in metabolic intermediate biosynthesis; chorismate biosynthesis; chorismate from D-erythrose 4-phosphate and phosphoenolpyruvate: step 5/7. Functionally, catalyzes the specific phosphorylation of the 3-hydroxyl group of shikimic acid using ATP as a cosubstrate. This is Shikimate kinase from Chloroherpeton thalassium (strain ATCC 35110 / GB-78).